The chain runs to 349 residues: MASDDRPLALTLGDPSGIGPEIALAAWRLRGERGVPPFQLIGDPEFLEATAYRLGLSVPVAEVEPDDAVEVFARALPVLPLPSGAKVSATPGAPDSANAGAIVESITAAVDLVRSGAASAVVTNPIAKFVLTRVGFAHPGHTEFLAALAAREGREPPLPVMMLWSELLAVVPVTIHVALRRVPDLLTQELVERTARIVHADLRARFGLEAPRLVLSGLNPHAGESGTMGTEDRDVLAPAVAALRAEGIDIRGPLPADTLFHERARATYDVALAPTHDQALIPIKTLAFDEGVNVTLGLPFVRTSPDHGTAFDIAGKGVAKPDSLIAALRLAQRLAQRPANNVTPFPVRA.

Substrate is bound by residues H141 and T142. Residues H176, H221, and H276 each coordinate a divalent metal cation. Substrate is bound by residues K284, N293, and R302.

This sequence belongs to the PdxA family. Homodimer. Zn(2+) serves as cofactor. Mg(2+) is required as a cofactor. Requires Co(2+) as cofactor.

The protein resides in the cytoplasm. The enzyme catalyses 4-(phosphooxy)-L-threonine + NAD(+) = 3-amino-2-oxopropyl phosphate + CO2 + NADH. The protein operates within cofactor biosynthesis; pyridoxine 5'-phosphate biosynthesis; pyridoxine 5'-phosphate from D-erythrose 4-phosphate: step 4/5. Its function is as follows. Catalyzes the NAD(P)-dependent oxidation of 4-(phosphooxy)-L-threonine (HTP) into 2-amino-3-oxo-4-(phosphooxy)butyric acid which spontaneously decarboxylates to form 3-amino-2-oxopropyl phosphate (AHAP). In Methylorubrum populi (strain ATCC BAA-705 / NCIMB 13946 / BJ001) (Methylobacterium populi), this protein is 4-hydroxythreonine-4-phosphate dehydrogenase.